The primary structure comprises 101 residues: Large ribosomal subunit protein bL21 (101 aa).

The protein belongs to the bacterial ribosomal protein bL21 family. As to quaternary structure, part of the 50S ribosomal subunit. Contacts protein L20.

Its function is as follows. This protein binds to 23S rRNA in the presence of protein L20. This Corynebacterium aurimucosum (strain ATCC 700975 / DSM 44827 / CIP 107346 / CN-1) (Corynebacterium nigricans) protein is Large ribosomal subunit protein bL21.